Here is a 138-residue protein sequence, read N- to C-terminus: Basic phospholipase A2 ammodytoxin C (138 aa).

An N-terminal signal peptide occupies residues 1 to 16 (MRTLWIVAVCLIGVEG). 7 cysteine pairs are disulfide-bonded: cysteine 42–cysteine 131, cysteine 44–cysteine 60, cysteine 59–cysteine 111, cysteine 65–cysteine 138, cysteine 66–cysteine 104, cysteine 73–cysteine 97, and cysteine 91–cysteine 102. Positions 43, 45, and 47 each coordinate Ca(2+). The active site involves histidine 63. Aspartate 64 serves as a coordination point for Ca(2+). The active site involves aspartate 105.

It belongs to the phospholipase A2 family. Group II subfamily. D49 sub-subfamily. In terms of assembly, monomer. Binds to calmodulin, coagulation factor X (F10), 14-3-3 proteins gamma (YWHAG) and epsilon (YWHAE), and R25, a mitochondrial membrane protein. May bind to M-type PLA2 receptor (R-180). It depends on Ca(2+) as a cofactor. In terms of tissue distribution, expressed by the venom gland.

It is found in the secreted. The protein resides in the host cytoplasm. The protein localises to the host cytosol. The catalysed reaction is a 1,2-diacyl-sn-glycero-3-phosphocholine + H2O = a 1-acyl-sn-glycero-3-phosphocholine + a fatty acid + H(+). Its function is as follows. Snake venom phospholipase A2 (PLA2) that acts as a presynaptic neurotoxin, an inhibitor of blood coagulation, and has been found to bind with high affinity to intracellular proteins. The response of indirectly stimulated neuromuscular preparations to ammodytoxin (Atx) is triphasic. The first phase, the transient inhibition of the acetylcholine (ACh) release, starts soon after the addition of Atx and lasts for several minutes. This phase is probably independent of Atx enzymatic activity. The effect may be due to the specific binding of the toxin to presynaptic receptors. These receptors, called N-type receptors, are still unidentified. It is noteworthy that a neuronal isoform of the M-type PLA2 receptor (R180) has been identified as a high-affinity receptor for Atx in neuronal plasma membranes. It was demonstrated however that this receptor is not essential for expression of neurotoxicity by Atx. The second phase corresponds to an augmentation of neurotransmitter release. A peak is reached 10-20 minutes after exposure of the preparation to Atx and is followed by a gradual reduction. In this phase, the enzymatic activity of Atx of the mammalian is not significant. It is speculated that the increased release of neurotransmitter in this phase is induced by the interference of Atx with voltage-gated potassium channels. Measurements of ionic showed however that voltage-gated potassium channels are not affected by Atx. The third phase of the response of neuromuscular preparations to Atx, which corresponds to a complete and irreversible paralysis, is clearly dependent on the hydrolytic activity of the toxin. In addition to its presynaptic neurotoxicity, Atx shows an anticoagulant activity by binding with high affinity to activated coagulation factor X (F10) thus inhibiting the formation of the prothrombinase complex (FX/FV) and its activity (IC(50) is 240 nM). Surprisingly, Atx was discovered to bind intracellular proteins such as calmodulin (CaM), 14-3-3 proteins gamma (YWHAG) and epsilon (YWHAE), as well as R25, a mitochondrial integral membrane protein found in cerebral cortex. These findings raised a doubt about the dogma of the exclusively extracellular action of PLA2s, defended by the potential instability of these molecules in the reducing environment of the eukaryotic cytosol coupled with their possible inability to act as enzymes in this cellular compartment, due to too low concentration of calcium ions. This hypothesis was challenged efficiently by demonstrating the internalization of AtxA into a culture cells, but still remains to be directly demonstrated in vivo. PLA2 catalyzes the calcium-dependent hydrolysis of the 2-acyl groups in 3-sn-phosphoglycerides. The protein is Basic phospholipase A2 ammodytoxin C of Vipera ammodytes ammodytes (Western sand viper).